A 221-amino-acid polypeptide reads, in one-letter code: MARFIAQLLLLASCVAAGQAVTAFLGERVTLTSYWRRVSLGPEIEVSWFKLGPGEEQVLIGRMHHDVIFIEWPFRGFFDIHRSANTFFLVVTAANISHDGNYLCRMKLGETEVTKQEHLSVVKPLTLSVHSERSQFPDFSVLTVTCTVNAFPHPHVQWLMPEGVEPAPTAANGGVMKEKDGSLSVAVDLSLPKPWHLPVTCVGKNDKEEAHGVYVSGYLSQ.

Positions 1–20 are cleaved as a signal peptide; sequence MARFIAQLLLLASCVAAGQA. Ig-like domains lie at 21 to 120 and 124 to 220; these read VTAF…EHLS and PLTL…GYLS. N-linked (GlcNAc...) asparagine; by host glycosylation occurs at asparagine 95. Cysteine 146 and cysteine 201 are disulfide-bonded.

Homohexamer. Interacts with human CSF1. In terms of processing, phosphorylated on serine and threonine by host.

It localises to the secreted. In terms of biological role, plays diverse functions in immunomodulation and oncogenicity, maybe by acting as a functional receptor for human CSF1. May inhibit interferon secretion from mononuclear cells. Exhibits oncogenic activity in vitro. This Epstein-Barr virus (strain B95-8) (HHV-4) protein is Secreted protein BARF1.